Here is a 133-residue protein sequence, read N- to C-terminus: P2Y purinoceptor 2 (133 aa).

Over 1–26 (ISVHRCLGVLRPLHSLRWGRARYARR) the chain is Cytoplasmic. Residues 27-47 (VAFAVWVLVLYCQAPVLYFVT) traverse the membrane as a helical segment. The Extracellular portion of the chain corresponds to 48-74 (TSTRSSRIICHDTSARELFSHFVAYSS). A helical membrane pass occupies residues 75–95 (VMLSLLFAAPFAVILVCYVLM). Residues 96 to 116 (ARRLLKPAYGTSGGLPRAKRK) are Cytoplasmic-facing. Residues 117 to 133 (SVRTIAIVLTVFVLCFL) form a helical membrane-spanning segment.

Belongs to the G-protein coupled receptor 1 family.

Its subcellular location is the cell membrane. Its function is as follows. Receptor for ATP and UTP coupled to G-proteins that activate a phosphatidylinositol-calcium second messenger system. This is P2Y purinoceptor 2 (P2RY2) from Bos taurus (Bovine).